The primary structure comprises 404 residues: Protein translocase subunit SecF (404 aa).

A run of 6 helical transmembrane segments spans residues 15-35 (KWYFLAFSLVFSVAGLISMGA), 225-245 (LLATLYSLGGMLVYLWFRFEL), 246-266 (IYGIGAVVACFHDTIITVGAF), 275-295 (LTVVAAILTLIGYSMNDTIVV), 327-347 (ILTSGLTFLTVLSLYVFGGEV), and 355-375 (LVIGILIGTYSSIAVAAPMLV).

This sequence belongs to the SecD/SecF family. SecF subfamily. In terms of assembly, forms a complex with SecD. Part of the essential Sec protein translocation apparatus which comprises SecA, SecYEG and auxiliary proteins SecDF. Other proteins may also be involved.

It is found in the cell inner membrane. Its function is as follows. Part of the Sec protein translocase complex. Interacts with the SecYEG preprotein conducting channel. SecDF uses the proton motive force (PMF) to complete protein translocation after the ATP-dependent function of SecA. The chain is Protein translocase subunit SecF from Koribacter versatilis (strain Ellin345).